A 647-amino-acid polypeptide reads, in one-letter code: Epithelial sodium channel subunit beta (647 aa).

The Cytoplasmic segment spans residues 1-57; the sequence is MIHGKMKRLKRYFTRALHRIQKGPGYTYKELLVWFCDNTNTHGPKRIIKEGPKKRVM. The helical transmembrane segment at 58–78 threads the bilayer; that stretch reads WFILTLVFAGLVFWQWGVLIL. Over 79–552 the chain is Extracellular; it reads TYLSYGVSVS…GGQFGFWMGG (474 aa). 8 cysteine pairs are disulfide-bonded: Cys-104-Cys-291, Cys-215-Cys-222, Cys-268-Cys-275, Cys-381-Cys-468, Cys-406-Cys-464, Cys-410-Cys-460, Cys-419-Cys-446, and Cys-421-Cys-435. Residues 553-573 form a helical membrane-spanning segment; that stretch reads SVLCIIEFGEIIIDCMWITIL. Residues 574-647 are Cytoplasmic-facing; it reads KFLAWSRNRR…AEPVSSDEEN (74 aa). The disordered stretch occupies residues 586–647; sequence RKRPQYSDPP…AEPVSSDEEN (62 aa).

Belongs to the amiloride-sensitive sodium channel (TC 1.A.6) family. SCNN1B subfamily. Component of the heterotrimeric epithelial sodium channel (ENaC) composed of an alpha/SCNN1A, a beta/SCNN1B and a gamma/SCNN1G subunit.

The protein localises to the apical cell membrane. It is found in the cytoplasmic vesicle membrane. The enzyme catalyses Na(+)(in) = Na(+)(out). Its activity is regulated as follows. Originally identified and characterized by its inhibition by the diuretic drug amiloride. In terms of biological role, this is one of the three pore-forming subunits of the heterotrimeric epithelial sodium channel (ENaC), a critical regulator of sodium balance and fluid homeostasis. ENaC operates in epithelial tissues, where it mediates the electrodiffusion of sodium ions from extracellular fluid through the apical membrane of cells, with water following osmotically. This chain is Epithelial sodium channel subunit beta (scnn1b-a), found in Xenopus laevis (African clawed frog).